Consider the following 130-residue polypeptide: uncharacterized protein (130 aa).

This is an uncharacterized protein from Pasteurella multocida (strain Pm70).